The following is a 491-amino-acid chain: tRNA-2-methylthio-N(6)-dimethylallyladenosine synthase (491 aa).

The MTTase N-terminal domain maps to 54–172; that stretch reads KTYHIKTFGC…ILNLLEQVIF (119 aa). Positions 63, 99, 133, 209, 213, and 216 each coordinate [4Fe-4S] cluster. The 232-residue stretch at 195–426 folds into the Radical SAM core domain; the sequence is RTNNLKGFVN…NEMVKTFSKK (232 aa). Residues 429–491 enclose the TRAM domain; sequence EKYVNKVLDV…RFTLNGKMID (63 aa).

This sequence belongs to the methylthiotransferase family. MiaB subfamily. Monomer. [4Fe-4S] cluster serves as cofactor.

The protein resides in the cytoplasm. It carries out the reaction N(6)-dimethylallyladenosine(37) in tRNA + (sulfur carrier)-SH + AH2 + 2 S-adenosyl-L-methionine = 2-methylsulfanyl-N(6)-dimethylallyladenosine(37) in tRNA + (sulfur carrier)-H + 5'-deoxyadenosine + L-methionine + A + S-adenosyl-L-homocysteine + 2 H(+). Functionally, catalyzes the methylthiolation of N6-(dimethylallyl)adenosine (i(6)A), leading to the formation of 2-methylthio-N6-(dimethylallyl)adenosine (ms(2)i(6)A) at position 37 in tRNAs that read codons beginning with uridine. This Malacoplasma penetrans (strain HF-2) (Mycoplasma penetrans) protein is tRNA-2-methylthio-N(6)-dimethylallyladenosine synthase.